Here is a 751-residue protein sequence, read N- to C-terminus: Semaphorin-3C (751 aa).

Residues 1–20 form the signal peptide; sequence MAFRAICVLVGVFICSICVR. The Sema domain occupies 28 to 511; sequence RVYLTFDELR…SNEGVSQVSL (484 aa). N-linked (GlcNAc...) asparagine glycosylation occurs at asparagine 81. Cysteine 101 and cysteine 112 are oxidised to a cystine. An N-linked (GlcNAc...) asparagine glycan is attached at asparagine 123. Cysteine 130 and cysteine 139 are disulfide-bonded. N-linked (GlcNAc...) asparagine glycans are attached at residues asparagine 252 and asparagine 268. 2 disulfide bridges follow: cysteine 266–cysteine 378 and cysteine 290–cysteine 338. Residue asparagine 465 is glycosylated (N-linked (GlcNAc...) asparagine). Residues cysteine 514 and cysteine 532 are joined by a disulfide bond. Residues 571 to 655 form the Ig-like C2-type domain; the sequence is AYRNAAEIVQ…TENSFKQTIA (85 aa). N-linked (GlcNAc...) asparagine glycosylation is found at asparagine 585 and asparagine 586. A disulfide bridge links cysteine 643 with cysteine 709.

This sequence belongs to the semaphorin family. In terms of assembly, interacts with PLXND1.

The protein localises to the secreted. Binds to plexin family members and plays an important role in the regulation of developmental processes. Required for normal cardiovascular development during embryogenesis. Functions as attractant for growing axons, and thereby plays an important role in axon growth and axon guidance. This Mus musculus (Mouse) protein is Semaphorin-3C (Sema3c).